Reading from the N-terminus, the 116-residue chain is Spexin (116 aa).

The signal sequence occupies residues 1 to 26 (MKGFKSLVVMTLTLFLVFSFMGNCNS). Residues 27–35 (APQRLFERR) constitute a propeptide that is removed on maturation. Residue glutamine 49 is modified to Glutamine amide. 2 consecutive propeptides follow at residues 50-116 (GRRF…LLNW) and 74-116 (PNSQ…LLNW). A compositionally biased stretch (basic and acidic residues) spans 53 to 73 (FLSDQSRRKDLSDRPPLERRS). Residues 53–80 (FLSDQSRRKDLSDRPPLERRSPNSQQLT) form a disordered region.

It belongs to the spexin family.

Its subcellular location is the secreted. The protein localises to the extracellular space. The protein resides in the cytoplasmic vesicle. It is found in the secretory vesicle. In terms of biological role, plays a role as a central modulator of cardiovascular and renal function and nociception. Also plays a role in energy metabolism and storage. Inhibits adrenocortical cell proliferation with minor stimulation on corticosteroid release. Its function is as follows. Acts as a ligand for galanin receptors GALR2 and GALR3. Intracerebroventricular administration of the peptide induces an increase in arterial blood pressure, a decrease in both heart rate and renal excretion and delayed natriuresis. Intraventricular administration of the peptide induces antinociceptive activity. Also induces contraction of muscarinic-like stomach smooth muscles. Intraperitoneal administration of the peptide induces a reduction in food consumption and body weight. Inhibits long chain fatty acid uptake into adipocytes. Functionally, intracerebroventricular administration of the peptide induces a decrease in heart rate, but no change in arterial pressure, and an increase in urine flow rate. Intraventricular administration of the peptide induces antinociceptive activity. This is Spexin (SPX) from Bos taurus (Bovine).